The primary structure comprises 311 residues: Dihydroorotate dehydrogenase B (NAD(+)), catalytic subunit (311 aa).

FMN contacts are provided by residues serine 24 and 48–49; that span reads KA. Residues lysine 48 and 72 to 76 each bind substrate; that span reads NAIGL. FMN-binding residues include asparagine 104 and asparagine 132. A substrate-binding site is contributed by asparagine 132. The active-site Nucleophile is the cysteine 135. Residues lysine 170 and isoleucine 196 each coordinate FMN. 197–198 contributes to the substrate binding site; that stretch reads NT. FMN-binding positions include glycine 222, 248 to 249, and 270 to 271; these read GG and GT.

This sequence belongs to the dihydroorotate dehydrogenase family. Type 1 subfamily. Heterotetramer of 2 PyrK and 2 PyrD type B subunits. It depends on FMN as a cofactor.

Its subcellular location is the cytoplasm. It catalyses the reaction (S)-dihydroorotate + NAD(+) = orotate + NADH + H(+). It participates in pyrimidine metabolism; UMP biosynthesis via de novo pathway; orotate from (S)-dihydroorotate (NAD(+) route): step 1/1. Its function is as follows. Catalyzes the conversion of dihydroorotate to orotate with NAD(+) as electron acceptor. Cannot use fumarate as an electron acceptor. The sequence is that of Dihydroorotate dehydrogenase B (NAD(+)), catalytic subunit (pyrDB) from Lactococcus lactis subsp. cremoris (strain MG1363).